Here is a 90-residue protein sequence, read N- to C-terminus: Putative UPF0401 protein YpjI (90 aa).

Belongs to the UPF0401 family.

This chain is Putative UPF0401 protein YpjI (ypjI), found in Escherichia coli (strain K12).